A 188-amino-acid polypeptide reads, in one-letter code: MDKRTTLVALVSIIFFTSGCDDQKKGNGNAESTQITKNDITTQLKLDKTQQPDDIEKKIKEIQANSTPEKIKKFNELKDDDPKILRESVVSEIKKKLPLLVDEATLMTDVSTDGGTFSYKYVTKGISASTMESDVWKDAMQKNIKNSYCSDDARLKVFRELFPEGVIYNYYLSDKLIYTYKALPSICS.

In Escherichia coli, this protein is Protein K (K).